The primary structure comprises 584 residues: Protein disulfide-isomerase-like protein of the testis (584 aa).

Positions 1–20 are cleaved as a signal peptide; it reads MDLLWMPLLLVAACVSAVHS. Asn58, Asn128, Asn160, and Asn340 each carry an N-linked (GlcNAc...) asparagine glycan. Positions 388-451 constitute a Thioredoxin domain; that stretch reads LVKQLVGKNF…IAKIDVTAND (64 aa). N-linked (GlcNAc...) asparagine glycosylation occurs at Asn540. The Prevents secretion from ER motif lies at 581–584; that stretch reads KEEL.

This sequence belongs to the protein disulfide isomerase family. In terms of assembly, homodimer. The homodimer is not disulfide-linked. Interacts with ERO1A and CLGN. In terms of processing, N-glycosylated. As to expression, testis-specific.

The protein resides in the endoplasmic reticulum. Its function is as follows. Probable redox-inactive chaperone involved in spermatogenesis. The polypeptide is Protein disulfide-isomerase-like protein of the testis (PDILT) (Homo sapiens (Human)).